A 196-amino-acid polypeptide reads, in one-letter code: MKPRTLVELSKLGLGNETVVQLRTLELPVDYREAKRRVTGIWEDHQPQLVVHVGMDTAAKAIILEQSGKNQGYRDADIRSFWPEGGVCLPGSPDVLESGVCMKAVCKRVAVEGVDVIFSRDAGRYVCDYTYYLSLHHGKGCAALIHVPPLSRGLPASLLGRALRVIIQEMLEEVGKPKHRAQFEENSTMVLPAKGN.

Residues Glu65, Cys127, and His146 contribute to the active site.

It belongs to the peptidase C15 family.

This chain is Pyroglutamyl-peptidase 1-like protein (PGPEP1L), found in Homo sapiens (Human).